We begin with the raw amino-acid sequence, 73 residues long: IGMVVECKDGYLMGPDGCKRGCLTRPARYCPNECSRLKGKDGYCYLWLACYCYNMPESAPVWERATNRCGKGK.

The first 7 residues, I1–C7, serve as a signal peptide directing secretion. The 63-residue stretch at K8–G70 folds into the LCN-type CS-alpha/beta domain. 4 cysteine pairs are disulfide-bonded: C18–C69, C22–C44, C30–C50, and C34–C52. A Lysine amide modification is found at K71.

This sequence belongs to the long (4 C-C) scorpion toxin superfamily. Sodium channel inhibitor family. Beta subfamily. Expressed by the venom gland.

It is found in the secreted. Beta toxins bind voltage-independently at site-4 of sodium channels (Nav) and shift the voltage of activation toward more negative potentials thereby affecting sodium channel activation and promoting spontaneous and repetitive firing. The sequence is that of Toxin Td10 from Tityus discrepans (Venezuelan scorpion).